The sequence spans 4043 residues: Polyketide synthase-nonribosomal peptide synthetase (4043 aa).

Positions 8–446 (SEPIAIIGTG…GANSHAILES (439 aa)) constitute a Ketosynthase family 3 (KS3) domain. Residues Cys-181, His-320, and His-366 each act as for beta-ketoacyl synthase activity in the active site. The acyl transferase stretch occupies residues 557–877 (VFTGQGAQWA…SRGNSDVEAF (321 aa)). Residues 944-1078 (NELLGRQVLD…CRLRITVGDS (135 aa)) form an N-terminal hotdog fold region. The PKS/mFAS DH domain maps to 944 to 1246 (NELLGRQVLD…TQPLSSPTEA (303 aa)). A dehydratase (DH) domain region spans residues 945 to 1243 (ELLGRQVLDG…GLQTQPLSSP (299 aa)). Catalysis depends on His-976, which acts as the Proton acceptor; for dehydratase activity. The C-terminal hotdog fold stretch occupies residues 1093-1246 (LLEVESDRFY…TQPLSSPTEA (154 aa)). The active-site Proton donor; for dehydratase activity is the Asp-1154. Residues 1400 to 1585 (RYTKYLAAMA…GIETAIPHHD (186 aa)) are methyltransferase (MT) domain. A ketoreductase (KR)domain region spans residues 2115–2288 (TYWLVGLTGG…NASAVHIGAI (174 aa)). Positions 2394-2475 (SSSADIYDII…EMVTQAQELL (82 aa)) constitute a Carrier 1 domain. Residues 2395–2472 (SSADIYDIIS…TVGEMVTQAQ (78 aa)) form a peptidyl carrier protein region. Ser-2435 bears the O-(pantetheine 4'-phosphoryl)serine mark. 2 disordered regions span residues 2476 to 2575 (PKEL…DPSR) and 2587 to 2630 (EKHL…SQII). Composition is skewed to polar residues over residues 2494–2512 (PKNT…QLQN) and 2520–2534 (ALSQ…NMIK). Residues 2537-2550 (PPKEAEAKQPRPEV) show a composition bias toward basic and acidic residues. A compositionally biased stretch (low complexity) spans 2617–2627 (TSSSSSSTSAS). The condensation stretch occupies residues 2640-3069 (KSVPMAFGQS…NPALRLNVPP (430 aa)). An adenylation region spans residues 3102-3502 (EIVERYPTHV…EGNLILGGRI (401 aa)). Positions 3617–3697 (TDESPSMAKM…GMVSLIDHSE (81 aa)) constitute a Carrier 2 domain. Residues 3622–3694 (SMAKMRDVWA…SLTGMVSLID (73 aa)) are thiolation. The residue at position 3657 (Ser-3657) is an O-(pantetheine 4'-phosphoryl)serine. Residues 3735–3954 (LTGATGFLGR…DFVSADRVAM (220 aa)) are reductase-like.

It in the C-terminal section; belongs to the NRP synthetase family.

Its pathway is mycotoxin biosynthesis. Its function is as follows. Hybrid PKS-NRPS synthetase; part of the gene cluster that mediates the biosynthesis of the mycotoxins cytochalasins E and K. The hybrid PKS-NRPS synthetase ccsA and the enoyl reductase ccsC are responsible for fusion of phenylalanine with an octaketide backbone and subsequent release of the stable tetramic acid precursor. The polyketide synthase module (PKS) of the PKS-NRPS ccsA is responsible for the synthesis of the octaketide backbone. The downstream nonribosomal peptide synthetase (NRPS) amidates the carboxyl end of the octaketide with a phenylalanine. A reductase-like domain (R) at the C-terminus catalyzes the reductive release of the polyketide-amino acid intermediate. Because ccsA lacks a designated enoylreductase (ER) domain, the required activity is provided the enoyl reductase ccsC. Upon formation of the 11-membered carbocycle-fused perhydroisoindolone intermediate, a number of oxidative steps are required to afford the final cytochalasin E and K, including two hydroxylations at C17 and C18, one alcohol oxidation at C17, one epoxidation at C6 and C7 and two Baeyer-Villiger oxidations. The oxidative modification at C17, C18 and the C6-C7 epoxidation are likely to be catalyzed by the two cytochrome P450 oxygenases ccsD and ccsG. CcsD may be responsible for the epoxidation of the C6-C7 double bond. CcsG may be responsible for the successive oxidative modifications at C17 and C18. The double Baeyer-Villiger oxidations of ketocytochalasin to precytochalasin and cytochalasin Z(16) are among the final steps leading to cytochalasin E and K and are catalyzed by ccsB. The first oxygen insertion step follows that of the classic BVMO mechanism, generating the ester precytochalasin. Release of precytochalasin into an aqueous environment can generate the shunt product iso-precytochalasin through spontaneous isomerization. Alternatively, precytochalasin can undergo further oxidation by ccsB to yield the in-line carbonate-containing cytochalasin Z(16). Cytochalasin Z(16) is a precursor to cytochalasin E and cytochalasin K, whereas iso-precytochalasin is a precursor to cytochalasin Z(17) and rosellichalasin. The hydrolyase ccsE may catalyze hydrolysis of epoxide bond in cytochalasin E to afford cytochalasin K. The function of ccsF has not been assigned but it may play a role in post-PKS-NRPS biosynthetic step, resistance or transport of cytochalasins and related PKS-NRPS products. The chain is Polyketide synthase-nonribosomal peptide synthetase from Aspergillus clavatus (strain ATCC 1007 / CBS 513.65 / DSM 816 / NCTC 3887 / NRRL 1 / QM 1276 / 107).